Reading from the N-terminus, the 547-residue chain is uncharacterized protein (547 aa).

A disordered region spans residues 1 to 37 (MSAASSAIPKRSDPRLLDQKKSAKSTLPKNTPENGVS). Positions 10 to 21 (KRSDPRLLDQKK) are enriched in basic and acidic residues. Residues 24–37 (KSTLPKNTPENGVS) are compositionally biased toward polar residues. 2 consecutive C3H1-type zinc fingers follow at residues 41–67 (NLQH…SHSL) and 68–95 (ETER…HALP). Residues 132–176 (SPSLSSKTMKNPADKANNTTATDVRGNTATSPYFPFSRSPGRHSG) form a disordered region. Residues 147–162 (ANNTTATDVRGNTATS) show a composition bias toward polar residues. Phosphoserine is present on Ser343. Tyr344 carries the phosphotyrosine modification. Residues Ser353, Ser355, Ser483, Ser489, Ser495, and Ser499 each carry the phosphoserine modification. Thr502 bears the Phosphothreonine mark. A compositionally biased stretch (polar residues) spans 526–536 (VANSSPPWNST). The tract at residues 526–547 (VANSSPPWNSTVEEETPFQMDD) is disordered. Over residues 537–547 (VEEETPFQMDD) the composition is skewed to acidic residues.

This is an uncharacterized protein from Schizosaccharomyces pombe (strain 972 / ATCC 24843) (Fission yeast).